Here is a 329-residue protein sequence, read N- to C-terminus: Flotillin-like protein FloA (329 aa).

Helical transmembrane passes span I4–V24 and V26–G46.

Belongs to the flotillin-like FloA family. In terms of assembly, homooligomerizes.

It is found in the cell membrane. The protein resides in the membrane raft. Its function is as follows. Found in functional membrane microdomains (FMM) that may be equivalent to eukaryotic membrane rafts. FMMs are highly dynamic and increase in number as cells age. Flotillins are thought to be important factors in membrane fluidity. In Staphylococcus epidermidis (strain ATCC 35984 / DSM 28319 / BCRC 17069 / CCUG 31568 / BM 3577 / RP62A), this protein is Flotillin-like protein FloA.